The following is a 349-amino-acid chain: Hypoxia-inducible factor 1-alpha inhibitor (349 aa).

Over residues 1-14 the composition is skewed to low complexity; sequence MAATAAEVAASGSG. A disordered region spans residues 1-51; it reads MAATAAEVAASGSGEAREEAEAPGPAWDESQLRSYSFPTRPIPRLSQSDPR. Ala2 carries the post-translational modification N-acetylalanine. An interaction with VHL region spans residues 2-125; the sequence is AATAAEVAAS…PRSNREEIKF (124 aa). Residues 142-307 form the JmjC domain; that stretch reads ERLYLQQTLN…KGAPTPKRIE (166 aa). Tyr145 provides a ligand contact to 2-oxoglutarate. Residues Asp152 and 181-183 each bind substrate; that span reads QLT. Thr196 lines the 2-oxoglutarate pocket. The Fe cation site is built by His199 and Asp201. 201–203 is a binding site for substrate; that stretch reads DEQ. 2-oxoglutarate is bound by residues Asn205 and Lys214. 238–239 contacts substrate; sequence RQ. His279 contacts Fe cation. Asn294 serves as a coordination point for 2-oxoglutarate. Ala300 and Asn321 together coordinate substrate.

In terms of assembly, homodimer; homodimerization is essential for catalytic activity. Interacts with VHL and HIF1A. Part of a complex with VHL, HIF1A and HDAC1 or HDAC2 or HDAC3. Interacts with NFKB1 and NFKBIA. Interacts with NOTCH1, NOTCH2 and NOTCH3 but not with NOTCH4. Interacts with ABPA3. Interacts with TNKS2. Interacts with PPP1R12A. Interacts with UBE3A. Interacts with ASB4. Interacts with ANKS3. Interacts with NECAB3; the interaction is indirect and seems to be mediated by APBA3. Fe(2+) is required as a cofactor.

The protein resides in the nucleus. Its subcellular location is the cytoplasm. It localises to the perinuclear region. It carries out the reaction L-asparaginyl-[hypoxia-inducible factor alpha subunit] + 2-oxoglutarate + O2 = (3S)-3-hydroxy-L-asparaginyl-[hypoxia-inducible factor alpha subunit] + succinate + CO2. It catalyses the reaction L-histidyl-[ankyrin-repeat domain protein] + 2-oxoglutarate + O2 = (3S)-3-hydroxy-L-histidyl-[ankyrin-repeat domain protein] + succinate + CO2. The enzyme catalyses L-asparaginyl-[ankyrin-repeat domain protein] + 2-oxoglutarate + O2 = (3S)-3-hydroxy-L-asparaginyl-[ankyrin-repeat domain protein] + succinate + CO2. The catalysed reaction is L-aspartyl-[ankyrin-repeat domain protein] + 2-oxoglutarate + O2 = (3S)-3-hydroxy-L-aspartyl-[ankyrin-repeat domain protein] + succinate + CO2. Its function is as follows. Hydroxylates HIF-1 alpha at 'Asn-799' in the C-terminal transactivation domain (CAD). Functions as an oxygen sensor and, under normoxic conditions, the hydroxylation prevents interaction of HIF-1 with transcriptional coactivators including Cbp/p300-interacting transactivator. Involved in transcriptional repression through interaction with HIF1A, VHL and histone deacetylases. Hydroxylates specific Asn residues within ankyrin repeat domains (ARD) of NFKB1, NFKBIA, NOTCH1, ASB4, PPP1R12A and several other ARD-containing proteins. Also hydroxylates Asp and His residues within ARDs of ANK1 and TNKS2, respectively. Negatively regulates NOTCH1 activity, accelerating myogenic differentiation. Positively regulates ASB4 activity, promoting vascular differentiation. This is Hypoxia-inducible factor 1-alpha inhibitor (Hif1an) from Mus musculus (Mouse).